Here is a 710-residue protein sequence, read N- to C-terminus: Methionine--tRNA ligase (710 aa).

The 'HIGH' region signature appears at P26–H36. Zn(2+) is bound by residues C157, C160, C170, and C173. A 'KMSKS' region motif is present at residues K347–S351. K350 contributes to the ATP binding site. The 107-residue stretch at D604–K710 folds into the tRNA-binding domain.

The protein belongs to the class-I aminoacyl-tRNA synthetase family. MetG type 1 subfamily. Homodimer. Zn(2+) serves as cofactor.

Its subcellular location is the cytoplasm. The catalysed reaction is tRNA(Met) + L-methionine + ATP = L-methionyl-tRNA(Met) + AMP + diphosphate. In terms of biological role, is required not only for elongation of protein synthesis but also for the initiation of all mRNA translation through initiator tRNA(fMet) aminoacylation. In Paraburkholderia xenovorans (strain LB400), this protein is Methionine--tRNA ligase.